A 231-amino-acid chain; its full sequence is UPF0702 transmembrane protein YetF (231 aa).

3 helical membrane passes run 5–25 (LSVA…LKLL), 33–53 (ITPF…NAVY), and 59–79 (IKEI…IEFI).

It belongs to the UPF0702 family.

The protein resides in the cell membrane. This chain is UPF0702 transmembrane protein YetF (yetF), found in Bacillus subtilis (strain 168).